A 1035-amino-acid polypeptide reads, in one-letter code: Enteropeptidase (1035 aa).

The N-myristoyl glycine moiety is linked to residue Gly-2. Residues 2–18 (GSKRSVPSRHRSLTTYE) are Cytoplasmic-facing. The helical; Signal-anchor for type II membrane protein transmembrane segment at 19–47 (VMFAVLFVILVALCAGLIAVSWLSIQGSV) threads the bilayer. Topologically, residues 48 to 1035 (KDAAFGKSHE…FTEWIQSFLH (988 aa)) are extracellular. In terms of domain architecture, SEA spans 54–169 (KSHEARGTLK…NSIDITASLE (116 aa)). Asn-116, Asn-147, Asn-170, and Asn-194 each carry an N-linked (GlcNAc...) asparagine glycan. The LDL-receptor class A 1 domain maps to 197-238 (IECPPDSRLCADALKCIAIDLFCDGELNCPDGSDEDNKTCAT). Disulfide bonds link Cys-199-Cys-212, Cys-206-Cys-225, Cys-219-Cys-236, and Cys-240-Cys-269. Asn-233, Asn-263, Asn-264, Asn-404, Asn-456, Asn-486, Asn-519, Asn-550, and Asn-646 each carry an N-linked (GlcNAc...) asparagine glycan. The 111-residue stretch at 240–350 (CDGRFLLTGS…IGFKVTYTAF (111 aa)) folds into the CUB 1 domain. Residues 358 to 520 (YEKINCNFED…ISLTYGICNV (163 aa)) enclose the MAM domain. A disulfide bridge connects residues Cys-540 and Cys-568. Residues 540 to 650 (CGGPHDLWEP…QGFKANFTTG (111 aa)) enclose the CUB 2 domain. Residues 657-695 (EPCKEDNFQCKDGECIPLVNLCDGFPHCKDGSDEAHCVR) form the LDL-receptor class A 2 domain. Disulfide bonds link Cys-659–Cys-671, Cys-666–Cys-684, and Cys-678–Cys-693. Residues 694–787 (VRLFNGTTDS…LILLQCNYKS (94 aa)) form the SRCR domain. 4 N-linked (GlcNAc...) asparagine glycosylation sites follow: Asn-698, Asn-722, Asn-741, and Asn-762. Intrachain disulfides connect Cys-773/Cys-783, Cys-788/Cys-912, Cys-826/Cys-842, Cys-926/Cys-993, Cys-957/Cys-972, and Cys-983/Cys-1011. In terms of domain architecture, Peptidase S1 spans 801–1035 (IVGGSDSREG…FTEWIQSFLH (235 aa)). Residue His-841 is the Charge relay system of the active site. Asn-864 carries an N-linked (GlcNAc...) asparagine glycan. Asp-892 serves as the catalytic Charge relay system. Asn-903 and Asn-965 each carry an N-linked (GlcNAc...) asparagine glycan. Ser-987 functions as the Charge relay system in the catalytic mechanism.

Belongs to the peptidase S1 family. As to quaternary structure, heterodimer of a catalytic (light) chain and a multidomain (heavy) chain linked by a disulfide bond. Post-translationally, the chains are derived from a single precursor that is cleaved by a trypsin-like protease. As to expression, intestinal brush border.

It localises to the membrane. The catalysed reaction is Activation of trypsinogen by selective cleavage of 6-Lys-|-Ile-7 bond.. Functionally, responsible for initiating activation of pancreatic proteolytic proenzymes (trypsin, chymotrypsin and carboxypeptidase A). It catalyzes the conversion of trypsinogen to trypsin which in turn activates other proenzymes including chymotrypsinogen, procarboxypeptidases, and proelastases. The sequence is that of Enteropeptidase (TMPRSS15) from Bos taurus (Bovine).